The primary structure comprises 213 residues: Response regulator GacA (213 aa).

The Response regulatory domain maps to 3 to 119; sequence RVLVVDDHDL…EMVQAIRLVF (117 aa). Asp-54 is subject to 4-aspartylphosphate. The HTH luxR-type domain occupies 142 to 207; the sequence is SDSPFDALSE…ELTLLAVRHG (66 aa). Positions 166–185 form a DNA-binding region, H-T-H motif; it reads VQIISDKLCLSPKTVNTYRY.

In terms of processing, phosphorylated by GacS.

Functionally, member of the two-component regulatory system GacA/GacS which controls the expression of secondary metabolites and extracellular products. Acts (probably primarily) by activating expression of CsrA1 and CsrA2 antagonist small RNAs (sRNA) RsmX, RsmY and RsmZ which bind to and prevent translation repression by CsrA1 and CsrA2. Involved in the regulation of secondary metabolism and in the synthesis of the antifungal factors cyanide, 2,4-diacetylphloroglucinol and pyoluteorin. Involved in synthesis of the autoinducing signal (unrelated to N-acylhomoserine lactones, induces the Gac/Csr cascade). Exercises positive post-transcriptional control over the hcnABC and aprA genes; acts upstream of CsrA2 (rsmA). Controls expression of csrA1 (rsmE) and csrA2. The polypeptide is Response regulator GacA (Pseudomonas protegens (strain DSM 19095 / LMG 27888 / CFBP 6595 / CHA0)).